The following is a 239-amino-acid chain: EF-hand domain-containing protein D1 (239 aa).

The segment covering 1–18 (MASEELACKLERRLRREE) has biased composition (basic and acidic residues). The tract at residues 1-53 (MASEELACKLERRLRREEAEESGPQLAPLGAPAPEPKPEPEPPARAPTASADA) is disordered. 2 consecutive EF-hand domains span residues 90–125 (RLIK…LGAP) and 126–161 (QTHL…AAAG). 8 residues coordinate Ca(2+): aspartate 103, aspartate 107, glutamate 114, aspartate 139, aspartate 141, aspartate 143, lysine 145, and glutamate 150. The residue at position 201 (serine 201) is a Phosphoserine.

It localises to the mitochondrion inner membrane. Its function is as follows. Acts as a calcium sensor for mitochondrial flash (mitoflash) activation, an event characterized by stochastic bursts of superoxide production. May play a role in neuronal differentiation. This Homo sapiens (Human) protein is EF-hand domain-containing protein D1 (EFHD1).